The primary structure comprises 166 residues: PR-toxin biosynthesis cluster protein 10 (166 aa).

Part of the gene cluster that mediates the biosynthesis of PR-toxin, a bicyclic sesquiterpene belonging to the eremophilane class and acting as a mycotoxin. The first step of the pathway is catalyzed by the aristolochene synthase which performs the cyclization of trans,trans-farnesyl diphosphate (FPP) to the bicyclic sesquiterpene aristolochene. Following the formation of aristolochene, the non-oxygenated aristolochene is converted to the trioxygenated intermediate eremofortin B, via 7-epi-neopetasone. This conversion appears to involve three enzymes, a hydroxysterol oxidase-like enzyme, the quinone-oxidase prx3 that forms the quinone-type-structure in the bicyclic nucleus of aristolochene with the C8-oxo group and the C-3 hydroxyl group, and the P450 monooxygenase prx9 that introduces the epoxide at the double bond between carbons 1 and 2. No monoxy or dioxy-intermediates have been reported to be released to the broth, so these three early oxidative reactions may be coupled together. Eremofortin B is further oxidized by another P450 monooxygenase, that introduces a second epoxide between carbons 7 and 11 prior to acetylation to eremofortin A by the acetyltransferase prx11. The second epoxidation may be performed by a second P450 monooxygenase. After the acetylation step, eremofortin A is converted to eremofortin C and then to PR-toxin. First the conversion of eremofortin A to eremofortin C proceeds by oxidation of the side chain of the molecule at C-12 and is catalyzed by the short-chain oxidoreductase prx1. The cytochrome P450 monooxygenase prx8 also plays a role in this step. The primary alcohol formed at C-12 is finally oxidized by the short-chain alcohol dehydrogenase prx4 that forms PR-toxin. This chain is PR-toxin biosynthesis cluster protein 10, found in Penicillium rubens (strain ATCC 28089 / DSM 1075 / NRRL 1951 / Wisconsin 54-1255) (Penicillium chrysogenum).